We begin with the raw amino-acid sequence, 850 residues long: Elongation factor 2 (850 aa).

Positions Lys17–Leu351 constitute a tr-type G domain. GTP-binding positions include Ala26–Ser33, Asn159–Asp162, and Ser213–Leu215. His707 carries the diphthamide modification.

The protein belongs to the TRAFAC class translation factor GTPase superfamily. Classic translation factor GTPase family. EF-G/EF-2 subfamily.

Its subcellular location is the cytoplasm. The catalysed reaction is GTP + H2O = GDP + phosphate + H(+). The protein operates within protein biosynthesis; polypeptide chain elongation. Its function is as follows. Catalyzes the GTP-dependent ribosomal translocation step during translation elongation. During this step, the ribosome changes from the pre-translocational (PRE) to the post-translocational (POST) state as the newly formed A-site-bound peptidyl-tRNA and P-site-bound deacylated tRNA move to the P and E sites, respectively. Catalyzes the coordinated movement of the two tRNA molecules, the mRNA and conformational changes in the ribosome. The polypeptide is Elongation factor 2 (EFT1) (Encephalitozoon cuniculi (strain GB-M1) (Microsporidian parasite)).